The primary structure comprises 527 residues: UDP-glucuronosyltransferase 2A1 (527 aa).

A signal peptide spans 1 to 20 (MLNNLLLFSLQISLIGTTLG). The Lumenal segment spans residues 21–491 (GNVLIWPMEG…TWFQYHSLDV (471 aa)). N-linked (GlcNAc...) asparagine glycans are attached at residues Asn49, Leu313, and Asn347. The chain crosses the membrane as a helical span at residues 492–512 (IGFLLVCVTTAIFLVIQCCLF). The Cytoplasmic portion of the chain corresponds to 513 to 527 (SCQKFGKIGKKKKRE).

It belongs to the UDP-glycosyltransferase family. Olfactory epithelium, brain and fetal lung. Not present in liver.

The protein localises to the membrane. It is found in the endoplasmic reticulum membrane. The enzyme catalyses glucuronate acceptor + UDP-alpha-D-glucuronate = acceptor beta-D-glucuronoside + UDP + H(+). It carries out the reaction 16beta,17beta-estriol + UDP-alpha-D-glucuronate = 16beta,17beta-estriol 16-O-(beta-D-glucuronate) + UDP + H(+). It catalyses the reaction 16alpha,17alpha-estriol + UDP-alpha-D-glucuronate = 16alpha,17alpha-estriol 16-O-(beta-D-glucuronate) + UDP + H(+). The catalysed reaction is 17alpha-estradiol + UDP-alpha-D-glucuronate = 17alpha-estradiol 17-O-(beta-D-glucuronate) + UDP + H(+). The enzyme catalyses 17alpha-estradiol + UDP-alpha-D-glucuronate = 17alpha-estradiol 3-O-(beta-D-glucuronate) + UDP + H(+). It carries out the reaction 17beta-estradiol + UDP-alpha-D-glucuronate = 17beta-estradiol 3-O-(beta-D-glucuronate) + UDP + H(+). It catalyses the reaction 17beta-estradiol + UDP-alpha-D-glucuronate = 17beta-estradiol 17-O-(beta-D-glucuronate) + UDP + H(+). The catalysed reaction is testosterone + UDP-alpha-D-glucuronate = testosterone 17-O-(beta-D-glucuronate) + UDP + H(+). The enzyme catalyses epitestosterone + UDP-alpha-D-glucuronate = epitestosterone 17-O-(beta-D-glucuronate) + UDP + H(+). It carries out the reaction lithocholate + UDP-alpha-D-glucuronate = lithocholoyl-3-O-(beta-D-glucuronate) + UDP + H(+). It catalyses the reaction lithocholate + UDP-alpha-D-glucuronate = lithocholoyl-24-O-(beta-D-glucuronate) + UDP. The catalysed reaction is deoxycholate + UDP-alpha-D-glucuronate = deoxycholoyl-24-O-(beta-D-glucuronate) + UDP. The enzyme catalyses hyodeoxycholate + UDP-alpha-D-glucuronate = hyodeoxycholoyl-24-O-(beta-D-glucuronate) + UDP. It carries out the reaction hyocholate + UDP-alpha-D-glucuronate = hyocholoyl-24-O-(beta-D-glucuronate) + UDP. Functionally, UDP-glucuronosyltransferase (UGT) that catalyzes phase II biotransformation reactions in which lipophilic substrates are conjugated with glucuronic acid to increase the metabolite's water solubility, thereby facilitating excretion into either the urine or bile. Essential for the elimination and detoxification of drugs, xenobiotics and endogenous compounds. Catalyzes the glucuronidation of endogenous steroid hormones such as androgens (testosterone and epitestosterone) and estrogens (estradiol and epiestriol). Contributes to bile acid (BA) detoxification by catalyzing the glucuronidation of BA substrates, which are natural detergents for dietary lipids absorption. Shows a high affinity to aliphatic odorants such as citronellol as well as olfactory tissue specificity, and therefore may be involved in olfaction. Shows a potential role in detoxification of toxic waste compounds in the amniotic fluid before birth, and air-born chemical after birth. This chain is UDP-glucuronosyltransferase 2A1, found in Homo sapiens (Human).